Here is a 135-residue protein sequence, read N- to C-terminus: MESFVAMKVVCILFLVGVVAANESGPTKADASTADKDTKKNNVQLRFPNYISNHQKLALKLLKICKDSKSSHNSLSSRSSDVINDKYVDFKNCTFLCKHGNDVNVTLNLPEDTPCGPNGQTCAEKNKCVGHIPGC.

The first 21 residues, 1-21 (MESFVAMKVVCILFLVGVVAA), serve as a signal peptide directing secretion. N22 carries an N-linked (GlcNAc...) asparagine glycan. The segment at 48-67 (PNYISNHQKLALKLLKICKD) is required for Borrelia OspC-binding. 2 N-linked (GlcNAc...) asparagine glycosylation sites follow: N92 and N104. The segment at 116–135 (GPNGQTCAEKNKCVGHIPGC) is CD4-binding.

This sequence belongs to the salp15 family. In terms of assembly, monomer. Interacts with host CD4. Interacts with host DC-SIGN (CD209). (Microbial infection) Interacts with Borrelia outer surface protein C (OspC). Glycosylated. Expressed in salivary glands. Detected in host skin, at the site of natural inoculation.

It is found in the secreted. In terms of biological role, salivary tick protein that downregulates host immune system by binding to both dendritic cells, and CD4(+) T cells. Specifically binds to the CD4 coreceptor on T cells. This interaction prevents the activation of the Src kinase, Lck, and its downstream substrate Zap-70, and results in deficient activation of PLCgamma1, the repression of calcium fluxes triggered by T-cell antigen receptor (TCR) ligation, and a subsequent reduction in interleukin-2 production. This salivary protein also binds to DC-SIGN (CD209) on dendritic cells (DC) and activates the Raf-1 kinase/MEK signaling pathway that results in down-regulating expression of pro-inflammatory cytokines. Furthermore, it inhibits T cell proliferation induced by DCs. It also inhibits in vitro keratinocyte inflammation induced by Borrelia burgdorferi or by the major outer surface protein (OspC) of Borrelia. In addition, it downregulates chemokines and monocyte chemoattractant protein 1, as well as several antimicrobial peptides such as defensins, cathelicidin, psoriasin, and RNase 7. Apart from its immunomodulatory activities, it is also associated with protection of Borrelia spirochetes from antibody-mediated killing through its binding to OspC. In vivo, tests on different immune disease animal models show promising therapeutic results, e.g., in inhibiting HIV infection, experimental autoimmune encephalomyelitis, transplantation rejection, and asthma. Functionally, (Microbial infection) Protects Borrelia garinii (strains A87S and VSBP) from host complement-mediated killing. Its function is as follows. (Microbial infection) Partially protects Borrelia burgdorferi (strains VS215 and B31) from host complement-mediated killing. The polypeptide is Salivary protein 15 (Ixodes scapularis (Black-legged tick)).